Consider the following 78-residue polypeptide: TP53-regulated inhibitor of apoptosis 1 (78 aa).

The stretch at 1 to 52 (MNSVGEECTDMKREYDQCFNRWFAEKFLKGECSGDPCTELFRRYRDCVQKAI) forms a coiled coil. Residues 5–55 (GEECTDMKREYDQCFNRWFAEKFLKGECSGDPCTELFRRYRDCVQKAIKDK) form the CHCH domain. 2 consecutive short sequence motifs (cx9C motif) follow at residues 8 to 18 (CTDMKREYDQC) and 37 to 47 (CTELFRRYRDC). 2 disulfides stabilise this stretch: Cys8-Cys47 and Cys18-Cys37.

It belongs to the TRIAP1/MDM35 family. In terms of assembly, monomer. Forms a complex with prelid1 in the mitochondrion intermembrane space. Interacts with prelid3a. As to expression, expressed in the developing pronephros.

The protein resides in the mitochondrion. The protein localises to the mitochondrion intermembrane space. The enzyme catalyses a 1,2-diacyl-sn-glycero-3-phosphate(in) = a 1,2-diacyl-sn-glycero-3-phosphate(out). In terms of biological role, involved in the modulation of the mitochondrial apoptotic pathway by ensuring the accumulation of cardiolipin (CL) in mitochondrial membranes. The triap1:prelid1 complex probably functions as a phosphatidic acid (PA) transporter across the mitochondrion intermembrane space to provide PA for cardiolipin CL synthesis in the inner membrane. Likewise, the triap1:prelid3a complex mediates the transfer of phosphatidic acid (PA) between liposomes (in vitro) and probably functions as a PA transporter across the mitochondrion intermembrane space (in vivo). Mediates cell survival by inhibiting activation of caspase-9 which prevents induction of apoptosis. Required for pronephros development; probably involved at an early stage in the formation of pronephric components derived from the somatic layer. This chain is TP53-regulated inhibitor of apoptosis 1, found in Xenopus tropicalis (Western clawed frog).